Consider the following 139-residue polypeptide: Peptide methionine sulfoxide reductase MsrB (139 aa).

Positions 17-139 constitute a MsrB domain; it reads EEQWRRELSP…NSAALKLEPK (123 aa). Zn(2+)-binding residues include cysteine 56, cysteine 59, cysteine 105, and cysteine 108. The active-site Nucleophile is cysteine 128.

Belongs to the MsrB Met sulfoxide reductase family. Zn(2+) is required as a cofactor.

It carries out the reaction L-methionyl-[protein] + [thioredoxin]-disulfide + H2O = L-methionyl-(R)-S-oxide-[protein] + [thioredoxin]-dithiol. In Bradyrhizobium diazoefficiens (strain JCM 10833 / BCRC 13528 / IAM 13628 / NBRC 14792 / USDA 110), this protein is Peptide methionine sulfoxide reductase MsrB.